The chain runs to 302 residues: Surfeit locus protein 4 homolog (302 aa).

6 helical membrane passes run 95 to 115 (APLL…LVVF), 120 to 140 (AYAI…YGLI), 193 to 213 (VLLI…ISWT), 215 to 235 (ILVH…FKAK), 236 to 256 (FFAA…NSFW), and 271 to 291 (DFFQ…TGPG). A Di-lysine motif motif is present at residues 299–302 (KKIY).

The protein belongs to the SURF4 family.

The protein localises to the endoplasmic reticulum membrane. The protein is Surfeit locus protein 4 homolog of Schizosaccharomyces pombe (strain 972 / ATCC 24843) (Fission yeast).